A 430-amino-acid chain; its full sequence is Glutamate-1-semialdehyde 2,1-aminomutase (430 aa).

Residue Lys265 is modified to N6-(pyridoxal phosphate)lysine.

This sequence belongs to the class-III pyridoxal-phosphate-dependent aminotransferase family. HemL subfamily. In terms of assembly, homodimer. Pyridoxal 5'-phosphate serves as cofactor.

Its subcellular location is the cytoplasm. The enzyme catalyses (S)-4-amino-5-oxopentanoate = 5-aminolevulinate. It participates in porphyrin-containing compound metabolism; protoporphyrin-IX biosynthesis; 5-aminolevulinate from L-glutamyl-tRNA(Glu): step 2/2. The sequence is that of Glutamate-1-semialdehyde 2,1-aminomutase from Shewanella sp. (strain MR-7).